The sequence spans 229 residues: Urease accessory protein UreF (229 aa).

The protein belongs to the UreF family. In terms of assembly, ureD, UreF and UreG form a complex that acts as a GTP-hydrolysis-dependent molecular chaperone, activating the urease apoprotein by helping to assemble the nickel containing metallocenter of UreC. The UreE protein probably delivers the nickel.

It localises to the cytoplasm. In terms of biological role, required for maturation of urease via the functional incorporation of the urease nickel metallocenter. The polypeptide is Urease accessory protein UreF (Trichormus variabilis (strain ATCC 29413 / PCC 7937) (Anabaena variabilis)).